The primary structure comprises 160 residues: SsrA-binding protein (160 aa).

It belongs to the SmpB family.

The protein resides in the cytoplasm. In terms of biological role, required for rescue of stalled ribosomes mediated by trans-translation. Binds to transfer-messenger RNA (tmRNA), required for stable association of tmRNA with ribosomes. tmRNA and SmpB together mimic tRNA shape, replacing the anticodon stem-loop with SmpB. tmRNA is encoded by the ssrA gene; the 2 termini fold to resemble tRNA(Ala) and it encodes a 'tag peptide', a short internal open reading frame. During trans-translation Ala-aminoacylated tmRNA acts like a tRNA, entering the A-site of stalled ribosomes, displacing the stalled mRNA. The ribosome then switches to translate the ORF on the tmRNA; the nascent peptide is terminated with the 'tag peptide' encoded by the tmRNA and targeted for degradation. The ribosome is freed to recommence translation, which seems to be the essential function of trans-translation. The protein is SsrA-binding protein of Erwinia tasmaniensis (strain DSM 17950 / CFBP 7177 / CIP 109463 / NCPPB 4357 / Et1/99).